The chain runs to 170 residues: Putative pre-16S rRNA nuclease (170 aa).

Residues 1–29 (MVAASHRSPDRPGDPEGLEPGTGRGRRLG) are disordered.

It belongs to the YqgF nuclease family.

Its subcellular location is the cytoplasm. Its function is as follows. Could be a nuclease involved in processing of the 5'-end of pre-16S rRNA. This is Putative pre-16S rRNA nuclease from Mycobacterium ulcerans (strain Agy99).